The primary structure comprises 346 residues: (R,R)-butanediol dehydrogenase (346 aa).

Zn(2+) is bound by residues C37, H70, and E152.

The protein belongs to the zinc-containing alcohol dehydrogenase family. As to quaternary structure, homotetramer. Interacts with BrxC. Requires Zn(2+) as cofactor.

It localises to the cytoplasm. The protein resides in the secreted. It carries out the reaction (R,R)-butane-2,3-diol + NAD(+) = (R)-acetoin + NADH + H(+). In Bacillus subtilis (strain 168), this protein is (R,R)-butanediol dehydrogenase.